A 159-amino-acid polypeptide reads, in one-letter code: Fimbrial protein MyfA (159 aa).

A signal peptide spans 1 to 29; the sequence is MNMKKFVKKPLAIAVLMLASGGMVNMVHA.

Forms a homomer composed of subunits assembled in a large structure resistant to proteases and chaotropic agents.

Its subcellular location is the fimbrium. Its function is as follows. Major pilus subunit. Expressed only in pathogenic serotypes, it is part of myf, a probable virulence factor. The chain is Fimbrial protein MyfA (myfA) from Yersinia enterocolitica.